A 471-amino-acid polypeptide reads, in one-letter code: Putative metabolite transport protein YncC (471 aa).

The next 12 membrane-spanning stretches (helical) occupy residues Leu-13 to Asn-33, Val-50 to Cys-70, Phe-88 to Val-108, Phe-111 to Met-131, Leu-146 to Met-166, Tyr-175 to Pro-195, Leu-256 to Met-276, Ile-295 to Val-315, Ile-323 to Ile-343, Leu-358 to Ile-378, Ile-393 to Leu-413, and Val-416 to Val-436.

The protein belongs to the major facilitator superfamily. Sugar transporter (TC 2.A.1.1) family.

It localises to the cell membrane. The sequence is that of Putative metabolite transport protein YncC (yncC) from Bacillus subtilis (strain 168).